A 198-amino-acid polypeptide reads, in one-letter code: Imidazoleglycerol-phosphate dehydratase (198 aa).

This sequence belongs to the imidazoleglycerol-phosphate dehydratase family.

The protein localises to the cytoplasm. The enzyme catalyses D-erythro-1-(imidazol-4-yl)glycerol 3-phosphate = 3-(imidazol-4-yl)-2-oxopropyl phosphate + H2O. It functions in the pathway amino-acid biosynthesis; L-histidine biosynthesis; L-histidine from 5-phospho-alpha-D-ribose 1-diphosphate: step 6/9. The chain is Imidazoleglycerol-phosphate dehydratase from Herminiimonas arsenicoxydans.